The sequence spans 503 residues: SusD-like protein P38 (503 aa).

Positions 1–21 are cleaved as a signal peptide; sequence MKKFKNISITFLILISLGVLN.

Belongs to the SusD family.

Its subcellular location is the cell outer membrane. In terms of biological role, polysaccharide-binding protein probably involved in ulvan degradation. Ulvan is the main polysaccharide component of the Ulvales (green seaweed) cell wall. It is composed of disaccharide building blocks comprising 3-sulfated rhamnose (Rha3S) linked to D-glucuronic acid (GlcA), L-iduronic acid (IduA), or D-xylose (Xyl). The SusD-like protein may mediate ulvan oligomer-binding before transport in the periplasm for further degradation. The polypeptide is SusD-like protein P38 (Formosa agariphila (strain DSM 15362 / KCTC 12365 / LMG 23005 / KMM 3901 / M-2Alg 35-1)).